The chain runs to 158 residues: Rhombotin-2 (158 aa).

2 LIM zinc-binding domains span residues 30–89 and 94–153; these read CGGC…RLFG and CASC…EWTK.

As to quaternary structure, interacts via its LIM domains with ELF2 and LDB1. Also interacts with basic helix-loop-helix protein TAL1/SCL and can assemble in a complex with LMO2 and TAL1/SCL. Interacts with BEX2 and KDM5A.

The protein localises to the nucleus. Its function is as follows. Acts with TAL1/SCL to regulate red blood cell development. Also acts with LDB1 to maintain erythroid precursors in an immature state. The polypeptide is Rhombotin-2 (LMO2) (Homo sapiens (Human)).